We begin with the raw amino-acid sequence, 147 residues long: Hemoglobin subunit epsilon (147 aa).

The Globin domain maps to 3–147 (HLTAEEKAAI…VAIALGHKYH (145 aa)). 2 positions are modified to phosphoserine: Ser-14 and Ser-51. 2 residues coordinate heme b: His-64 and His-93.

Belongs to the globin family. Heterotetramer of two alpha chains and two epsilon chains in early embryonic hemoglobin Gower-2; two zeta chains and two epsilon chains in early embryonic hemoglobin Gower-1. As to expression, red blood cells.

Its function is as follows. The epsilon chain is a beta-type chain of early mammalian embryonic hemoglobin. This Ateles belzebuth (White-bellied spider monkey) protein is Hemoglobin subunit epsilon (HBE1).